The sequence spans 1076 residues: Nickel and cobalt resistance protein CnrA (1076 aa).

12 consecutive transmembrane segments (helical) span residues 14 to 34 (WLVL…LNLL), 366 to 386 (TVAK…FALL), 390 to 410 (RAAT…AIGM), 418 to 438 (NLMS…VIIV), 475 to 495 (PTVY…TFQG), 502 to 522 (SPMV…SLTF), 561 to 581 (PMPF…AFTF), 903 to 923 (RLAI…YMAI), 928 to 948 (LTAT…FALL), 959 to 979 (AVGF…LISA), 1003 to 1023 (RPVL…AIAT), and 1035 to 1055 (TVVI…LPAL).

Belongs to the resistance-nodulation-cell division (RND) (TC 2.A.6) family.

Its subcellular location is the cell inner membrane. The products of the genes cnrA, cnrB, and cnrC are likely to form a membrane-bound protein complex catalyzing an energy-dependent efflux of Ni(2+) and Co(2+). The mechanism of action of the CnrCBA complex may be that of a proton/cation antiporter. The chain is Nickel and cobalt resistance protein CnrA (cnrA) from Cupriavidus metallidurans (strain ATCC 43123 / DSM 2839 / NBRC 102507 / CH34) (Ralstonia metallidurans).